Reading from the N-terminus, the 545-residue chain is ATP synthase subunit alpha, mitochondrial (545 aa).

The transit peptide at 1–35 (MLARTAAIRSLSRTLINSTKAARPAAAALASTRRL) directs the protein to the mitochondrion. Residues Ser-57 and Ser-178 each carry the phosphoserine modification. 206–213 (GDRQTGKT) contributes to the ATP binding site.

It belongs to the ATPase alpha/beta chains family. F-type ATPases have 2 components, CF(1) - the catalytic core - and CF(0) - the membrane proton channel. CF(1) has five subunits: alpha(3), beta(3), gamma(1), delta(1), epsilon(1). CF(0) has three main subunits: a, b and c.

The protein localises to the mitochondrion inner membrane. In terms of biological role, mitochondrial membrane ATP synthase (F(1)F(0) ATP synthase or Complex V) produces ATP from ADP in the presence of a proton gradient across the membrane which is generated by electron transport complexes of the respiratory chain. F-type ATPases consist of two structural domains, F(1) - containing the extramembraneous catalytic core, and F(0) - containing the membrane proton channel, linked together by a central stalk and a peripheral stalk. During catalysis, ATP synthesis in the catalytic domain of F(1) is coupled via a rotary mechanism of the central stalk subunits to proton translocation. Subunits alpha and beta form the catalytic core in F(1). Rotation of the central stalk against the surrounding alpha(3)beta(3) subunits leads to hydrolysis of ATP in three separate catalytic sites on the beta subunits. Subunit alpha does not bear the catalytic high-affinity ATP-binding sites. This Saccharomyces cerevisiae (strain ATCC 204508 / S288c) (Baker's yeast) protein is ATP synthase subunit alpha, mitochondrial (ATP1).